Here is a 144-residue protein sequence, read N- to C-terminus: Large ribosomal subunit protein uL15 (144 aa).

Residues 1 to 59 (MELNNLKPAEGAKHAKRRVGRGIGSGLGKTAGRGHKGQKSRSGGFHKVGFEGGQMPLQR) form a disordered region. Residues 21–31 (RGIGSGLGKTA) are compositionally biased toward gly residues.

This sequence belongs to the universal ribosomal protein uL15 family. As to quaternary structure, part of the 50S ribosomal subunit.

Binds to the 23S rRNA. The polypeptide is Large ribosomal subunit protein uL15 (Burkholderia thailandensis (strain ATCC 700388 / DSM 13276 / CCUG 48851 / CIP 106301 / E264)).